The chain runs to 47 residues: U18-ctenitoxin-Pn1a (47 aa).

5 cysteine pairs are disulfide-bonded: Cys2/Cys16, Cys9/Cys22, Cys13/Cys46, Cys15/Cys34, and Cys24/Cys32.

In terms of tissue distribution, expressed by the venom gland.

It localises to the secreted. Neurotoxin. Causes spastic paralysis and death in mice by intracerebroventricular injection at dose levels of 3 ug per mouse. The protein is U18-ctenitoxin-Pn1a of Phoneutria nigriventer (Brazilian armed spider).